Reading from the N-terminus, the 315-residue chain is MKIFFVSSSSIALEVFKEIVKHYEVVGVLTLPDKPKGRGQKLSQNVIKLEAIAKNIKVFDPLILDDNILNLIRDLNPDLMLVFSYGKIFKKEFLDIFPKGCINVHPSLLPKYRGVSPIQSAILNGDCVSGITIQNMALKMDSGNILVQKNFKIKSCDTSYDISKLVSSLSPNLVLEALEKIGKGFLGIPQKSSEATFCSFFKKESGFVDFNLSAFEIKNRINACNPWPLARARLDYGDIIFHRADFLKIDLYKEKKVGEIVDFDSEKGLFVNTGEGILLLLEVQRPGRRVLDYKSFYNGSRQLIGQVFSSIGGVY.

107-110 (SLLP) is a (6S)-5,6,7,8-tetrahydrofolate binding site.

It belongs to the Fmt family.

It catalyses the reaction L-methionyl-tRNA(fMet) + (6R)-10-formyltetrahydrofolate = N-formyl-L-methionyl-tRNA(fMet) + (6S)-5,6,7,8-tetrahydrofolate + H(+). Attaches a formyl group to the free amino group of methionyl-tRNA(fMet). The formyl group appears to play a dual role in the initiator identity of N-formylmethionyl-tRNA by promoting its recognition by IF2 and preventing the misappropriation of this tRNA by the elongation apparatus. The sequence is that of Methionyl-tRNA formyltransferase from Borreliella afzelii (strain PKo) (Borrelia afzelii).